A 78-amino-acid chain; its full sequence is Large ribosomal subunit protein uL29 (78 aa).

Belongs to the universal ribosomal protein uL29 family.

This chain is Large ribosomal subunit protein uL29, found in Rhodococcus erythropolis (strain PR4 / NBRC 100887).